Here is a 227-residue protein sequence, read N- to C-terminus: DNA repair protein RecO (227 aa).

The protein belongs to the RecO family.

Its function is as follows. Involved in DNA repair and RecF pathway recombination. The polypeptide is DNA repair protein RecO (Pseudomonas putida (strain ATCC 700007 / DSM 6899 / JCM 31910 / BCRC 17059 / LMG 24140 / F1)).